The chain runs to 175 residues: Large ribosomal subunit protein uL10 (175 aa).

The protein belongs to the universal ribosomal protein uL10 family. In terms of assembly, part of the ribosomal stalk of the 50S ribosomal subunit. The N-terminus interacts with L11 and the large rRNA to form the base of the stalk. The C-terminus forms an elongated spine to which L12 dimers bind in a sequential fashion forming a multimeric L10(L12)X complex.

Functionally, forms part of the ribosomal stalk, playing a central role in the interaction of the ribosome with GTP-bound translation factors. This is Large ribosomal subunit protein uL10 from Prochlorococcus marinus (strain NATL2A).